The sequence spans 158 residues: NAD(P)H-quinone oxidoreductase subunit J, chloroplastic (158 aa).

The protein belongs to the complex I 30 kDa subunit family. As to quaternary structure, NDH is composed of at least 16 different subunits, 5 of which are encoded in the nucleus.

Its subcellular location is the plastid. The protein localises to the chloroplast thylakoid membrane. The catalysed reaction is a plastoquinone + NADH + (n+1) H(+)(in) = a plastoquinol + NAD(+) + n H(+)(out). It catalyses the reaction a plastoquinone + NADPH + (n+1) H(+)(in) = a plastoquinol + NADP(+) + n H(+)(out). Its function is as follows. NDH shuttles electrons from NAD(P)H:plastoquinone, via FMN and iron-sulfur (Fe-S) centers, to quinones in the photosynthetic chain and possibly in a chloroplast respiratory chain. The immediate electron acceptor for the enzyme in this species is believed to be plastoquinone. Couples the redox reaction to proton translocation, and thus conserves the redox energy in a proton gradient. This chain is NAD(P)H-quinone oxidoreductase subunit J, chloroplastic, found in Drimys granadensis.